We begin with the raw amino-acid sequence, 434 residues long: Aspartate--tRNA(Asp/Asn) ligase (434 aa).

L-aspartate is bound at residue Glu-167. The interval 189 to 192 is aspartate; the sequence is QLFK. Residue Arg-211 participates in L-aspartate binding. Residues 211 to 213, 219 to 221, and Glu-357 each bind ATP; these read RAE and RHL. Mg(2+) contacts are provided by Glu-357 and Ser-360. L-aspartate-binding residues include Ser-360 and Arg-364. 405-408 is an ATP binding site; that stretch reads GGER.

It belongs to the class-II aminoacyl-tRNA synthetase family. Type 2 subfamily. Homodimer. Requires Mg(2+) as cofactor.

It is found in the cytoplasm. The catalysed reaction is tRNA(Asx) + L-aspartate + ATP = L-aspartyl-tRNA(Asx) + AMP + diphosphate. Functionally, aspartyl-tRNA synthetase with relaxed tRNA specificity since it is able to aspartylate not only its cognate tRNA(Asp) but also tRNA(Asn). Reaction proceeds in two steps: L-aspartate is first activated by ATP to form Asp-AMP and then transferred to the acceptor end of tRNA(Asp/Asn). This Haloquadratum walsbyi (strain DSM 16790 / HBSQ001) protein is Aspartate--tRNA(Asp/Asn) ligase.